A 181-amino-acid chain; its full sequence is Ubiquitin-like protein 4B (181 aa).

The Ubiquitin-like domain occupies 1–76; the sequence is MWLTVKLLLG…LNVIIRPLEK (76 aa). Residues 139 to 181 form a disordered region; that stretch reads PEGKHSGATGSTRESKGDMEPRRNMKCNLAHKDGFKREKSPGK. Basic and acidic residues-rich tracts occupy residues 151 to 161 and 168 to 181; these read RESKGDMEPRR and AHKD…SPGK.

The protein resides in the cytoplasm. This chain is Ubiquitin-like protein 4B (UBL4B), found in Monodelphis domestica (Gray short-tailed opossum).